Reading from the N-terminus, the 342-residue chain is Phosphate acyltransferase (342 aa).

This sequence belongs to the PlsX family. As to quaternary structure, homodimer. Probably interacts with PlsY.

It localises to the cytoplasm. It carries out the reaction a fatty acyl-[ACP] + phosphate = an acyl phosphate + holo-[ACP]. It functions in the pathway lipid metabolism; phospholipid metabolism. In terms of biological role, catalyzes the reversible formation of acyl-phosphate (acyl-PO(4)) from acyl-[acyl-carrier-protein] (acyl-ACP). This enzyme utilizes acyl-ACP as fatty acyl donor, but not acyl-CoA. In Blochmanniella pennsylvanica (strain BPEN), this protein is Phosphate acyltransferase.